Here is a 276-residue protein sequence, read N- to C-terminus: U6 snRNA phosphodiesterase 1 (276 aa).

Positions 1-58 (MIVNYSSSSSEEESGSSSSPSGKRQKLDTETSEALDHGSAQRKVCKSSHLTPRLPLPE) are disordered. The active-site Proton acceptor is His131. AMP contacts are provided by residues 131–133 (HLS), Tyr213, and 215–221 (DPSFHIS). Residues Tyr213 and 217–221 (SFHIS) contribute to the UMP site. Catalysis depends on His219, which acts as the Proton donor.

This sequence belongs to the 2H phosphoesterase superfamily. USB1 family.

It localises to the nucleus. The enzyme catalyses a 3'-end uridylyl-uridine-RNA = a 3'-end 2',3'-cyclophospho-uridine-RNA + uridine. The catalysed reaction is a 3'-end uridylyl-adenosine-RNA = a 3'-end 2',3'-cyclophospho-uridine-RNA + adenosine. Its function is as follows. 3'-5' RNA exonuclease that trims the 3' end of oligo(U) and oligo(A) tracts of the pre-U6 small nuclear RNA (snRNA) molecule, leading to the formation of a mature U6 snRNA 3' end-terminated with a 2',3'-cyclic phosphate. Participates in the U6 snRNA 3' end processing that prevents U6 snRNA degradation. In addition also removes uridines from the 3' end of U6atac snRNA and possibly the vault RNA VTRNA1-1. The chain is U6 snRNA phosphodiesterase 1 from Danio rerio (Zebrafish).